Here is a 75-residue protein sequence, read N- to C-terminus: UPF0352 protein ETA_12580 (75 aa).

This sequence belongs to the UPF0352 family.

This chain is UPF0352 protein ETA_12580, found in Erwinia tasmaniensis (strain DSM 17950 / CFBP 7177 / CIP 109463 / NCPPB 4357 / Et1/99).